Here is a 211-residue protein sequence, read N- to C-terminus: Testis-expressed protein 35 (211 aa).

Positions 47 to 111 (GGTKELKNEL…MDVLINIQKN (65 aa)) form a coiled coil.

The polypeptide is Testis-expressed protein 35 (Tex35) (Bos taurus (Bovine)).